The chain runs to 184 residues: ATP synthase subunit b, chloroplastic (184 aa).

A helical membrane pass occupies residues 29–49 (TNLINLGVVLGLLVYFGKGVL).

Belongs to the ATPase B chain family. As to quaternary structure, F-type ATPases have 2 components, F(1) - the catalytic core - and F(0) - the membrane proton channel. F(1) has five subunits: alpha(3), beta(3), gamma(1), delta(1), epsilon(1). F(0) has four main subunits: a(1), b(1), b'(1) and c(10-14). The alpha and beta chains form an alternating ring which encloses part of the gamma chain. F(1) is attached to F(0) by a central stalk formed by the gamma and epsilon chains, while a peripheral stalk is formed by the delta, b and b' chains.

The protein localises to the plastid. It is found in the chloroplast thylakoid membrane. F(1)F(0) ATP synthase produces ATP from ADP in the presence of a proton or sodium gradient. F-type ATPases consist of two structural domains, F(1) containing the extramembraneous catalytic core and F(0) containing the membrane proton channel, linked together by a central stalk and a peripheral stalk. During catalysis, ATP synthesis in the catalytic domain of F(1) is coupled via a rotary mechanism of the central stalk subunits to proton translocation. Its function is as follows. Component of the F(0) channel, it forms part of the peripheral stalk, linking F(1) to F(0). This chain is ATP synthase subunit b, chloroplastic, found in Anthoceros angustus (Hornwort).